Here is a 445-residue protein sequence, read N- to C-terminus: StAR-related lipid transfer protein 3 (445 aa).

The Cytoplasmic segment spans residues 1–51 (MSKLPRELTRDLERSLPAVASLGSSLSHSQSLSSHLLPPPEKRRAISDVRR). The MENTAL domain occupies 46-217 (ISDVRRTFCL…YSPPESFAGS (172 aa)). Residues 52 to 72 (TFCLFVTFDLLFISLLWIIEL) traverse the membrane as a helical segment. Over 73–94 (NTNTGIRKNLEQEIIQYNFKTS) the chain is Extracellular. A helical membrane pass occupies residues 95 to 115 (FFDIFVLAFFRFSGLLLGYAV). Topologically, residues 116-120 (LRLRH) are cytoplasmic. Residues 121 to 141 (WWVIAVTTLVSSAFLIVKVIL) traverse the membrane as a helical segment. Residues 142 to 148 (SELLSKG) lie on the Extracellular side of the membrane. Residues 149–169 (AFGYLLPIVSFVLAWLETWFL) form a helical membrane-spanning segment. Residues 170 to 445 (DFKVLPQEAE…QRISELGARA (276 aa)) lie on the Cytoplasmic side of the membrane. The FFAT signature appears at 206-212 (QFYSPPE). Serine 209 bears the Phosphoserine mark. An START domain is found at 230-443 (SFSAQEREYI…LRQRISELGA (214 aa)).

The protein belongs to the STARD3 family. As to quaternary structure, homodimer. Interacts (via the MENTAL domain) with STARD3NL. Interacts (via phosphorylated FFAT motif) with VAPA (via MSP domain). Interacts (via phosphorylated FFAT motif) with VAPB (via MSP domain). Interacts (via phosphorylated FFAT motif) with MOSPD2 (via MSP domain); this interaction allows enrichment of MOSPD2 around endosomes. Phosphorylation at Ser-209 is necessary and sufficient for the direct interaction of the phosphorylated FFAT motif with the MSP domain of MOSPD2, VAPA and VAPB and allows the tethering of two membranes that participates in the formation of ER-endosome contacts. Phosphorylation of the FFAT motif leads to conformation changes. Additional phosphorylations around the core FFAT motif (QFYSPPE) are not essential but strengthen the interaction with MOSPD2, VAPA and VAPB. Phosphorylation at Ser-209 of FFAT motif drives membrane tethering between the endoplasmic reticulum and late endosomes via interaction with VAPA and VAPB that in turn allows the efficient transport of sterol mediated by the START domain. In terms of tissue distribution, expressed in retina.

The protein localises to the late endosome membrane. It carries out the reaction cholesterol(in) = cholesterol(out). Sterol-binding protein that mediates cholesterol transport from the endoplasmic reticulum to endosomes. The sterol transport mechanism is triggered by phosphorylation of FFAT motif that leads to membrane tethering between the endoplasmic reticulum and late endosomes via interaction with VAPA and VAPB. Acts as a lipid transfer protein that redirects sterol to the endosome at the expense of the cell membrane and favors membrane formation inside endosomes. May also mediate cholesterol transport between other membranes, such as mitochondria membrane or cell membrane. However, such results need additional experimental evidences; probably mainly mediates cholesterol transport from the endoplasmic reticulum to endosomes. Does not activate transcriptional cholesterol sensing. Able to bind other lipids, such as lutein, a xanthophyll carotenoids that form the macular pigment of the retina. This Homo sapiens (Human) protein is StAR-related lipid transfer protein 3.